Consider the following 444-residue polypeptide: Exodeoxyribonuclease 7 large subunit (444 aa).

This sequence belongs to the XseA family. In terms of assembly, heterooligomer composed of large and small subunits.

Its subcellular location is the cytoplasm. The enzyme catalyses Exonucleolytic cleavage in either 5'- to 3'- or 3'- to 5'-direction to yield nucleoside 5'-phosphates.. Its function is as follows. Bidirectionally degrades single-stranded DNA into large acid-insoluble oligonucleotides, which are then degraded further into small acid-soluble oligonucleotides. The protein is Exodeoxyribonuclease 7 large subunit of Aliivibrio salmonicida (strain LFI1238) (Vibrio salmonicida (strain LFI1238)).